The following is a 343-amino-acid chain: tRNA N6-adenosine threonylcarbamoyltransferase (343 aa).

Residues histidine 120 and histidine 124 each coordinate Fe cation. Residues 142-146, aspartate 175, glycine 188, aspartate 192, and asparagine 281 contribute to the substrate site; that span reads VVSGG. Fe cation is bound at residue aspartate 310.

The protein belongs to the KAE1 / TsaD family. The cofactor is Fe(2+).

It is found in the cytoplasm. It catalyses the reaction L-threonylcarbamoyladenylate + adenosine(37) in tRNA = N(6)-L-threonylcarbamoyladenosine(37) in tRNA + AMP + H(+). Its function is as follows. Required for the formation of a threonylcarbamoyl group on adenosine at position 37 (t(6)A37) in tRNAs that read codons beginning with adenine. Is involved in the transfer of the threonylcarbamoyl moiety of threonylcarbamoyl-AMP (TC-AMP) to the N6 group of A37, together with TsaE and TsaB. TsaD likely plays a direct catalytic role in this reaction. The polypeptide is tRNA N6-adenosine threonylcarbamoyltransferase (Bacillus cereus (strain ATCC 10987 / NRS 248)).